Reading from the N-terminus, the 572-residue chain is Proline--tRNA ligase (572 aa).

The protein belongs to the class-II aminoacyl-tRNA synthetase family. ProS type 1 subfamily. In terms of assembly, homodimer.

Its subcellular location is the cytoplasm. It catalyses the reaction tRNA(Pro) + L-proline + ATP = L-prolyl-tRNA(Pro) + AMP + diphosphate. In terms of biological role, catalyzes the attachment of proline to tRNA(Pro) in a two-step reaction: proline is first activated by ATP to form Pro-AMP and then transferred to the acceptor end of tRNA(Pro). As ProRS can inadvertently accommodate and process non-cognate amino acids such as alanine and cysteine, to avoid such errors it has two additional distinct editing activities against alanine. One activity is designated as 'pretransfer' editing and involves the tRNA(Pro)-independent hydrolysis of activated Ala-AMP. The other activity is designated 'posttransfer' editing and involves deacylation of mischarged Ala-tRNA(Pro). The misacylated Cys-tRNA(Pro) is not edited by ProRS. The chain is Proline--tRNA ligase from Citrobacter koseri (strain ATCC BAA-895 / CDC 4225-83 / SGSC4696).